Reading from the N-terminus, the 185-residue chain is Ribosome-recycling factor (185 aa).

It belongs to the RRF family.

It localises to the cytoplasm. Functionally, responsible for the release of ribosomes from messenger RNA at the termination of protein biosynthesis. May increase the efficiency of translation by recycling ribosomes from one round of translation to another. The protein is Ribosome-recycling factor of Buchnera aphidicola subsp. Acyrthosiphon pisum (strain 5A).